A 181-amino-acid chain; its full sequence is Malignant T-cell-amplified sequence 2 (181 aa).

The PUA domain occupies 92–171; it reads LPHQQVDKGA…IGIENIHYLN (80 aa).

It belongs to the MCTS1 family.

It localises to the cytoplasm. This Homo sapiens (Human) protein is Malignant T-cell-amplified sequence 2.